We begin with the raw amino-acid sequence, 1007 residues long: Protocadherin alpha-C2 (1007 aa).

Positions M1–S42 are cleaved as a signal peptide. Cadherin domains are found at residues Q43 to F148, P149 to F257, D258 to V365, V374 to F469, and L470 to I579. Topologically, residues Q43–L708 are extracellular. N-linked (GlcNAc...) asparagine glycosylation is found at N280 and N436. N-linked (GlcNAc...) asparagine glycosylation is found at N586 and N657. The Cadherin 6 domain occupies G594 to T691. The helical transmembrane segment at I709–I729 threads the bilayer. Residues K730 to Q1007 are Cytoplasmic-facing. PXXP repeat units follow at residues P856–P859, P889–P892, P930–P933, and P948–P951. A 4 X 4 AA repeats of P-X-X-P region spans residues P856–P951. Residues L885–Q1007 are disordered. Basic and acidic residues predominate over residues D966 to K980.

It is found in the cell membrane. In terms of biological role, potential calcium-dependent cell-adhesion protein. May be involved in the establishment and maintenance of specific neuronal connections in the brain. The sequence is that of Protocadherin alpha-C2 (PCDHAC2) from Pan troglodytes (Chimpanzee).